A 230-amino-acid chain; its full sequence is N-(5'-phosphoribosyl)anthranilate isomerase (230 aa).

Belongs to the TrpF family.

The enzyme catalyses N-(5-phospho-beta-D-ribosyl)anthranilate = 1-(2-carboxyphenylamino)-1-deoxy-D-ribulose 5-phosphate. Its pathway is amino-acid biosynthesis; L-tryptophan biosynthesis; L-tryptophan from chorismate: step 3/5. This Ralstonia nicotianae (strain ATCC BAA-1114 / GMI1000) (Ralstonia solanacearum) protein is N-(5'-phosphoribosyl)anthranilate isomerase.